An 808-amino-acid chain; its full sequence is Protein translocase subunit SecA (808 aa).

ATP-binding positions include glutamine 87, 105 to 109 (GEGKT), and aspartate 493.

The protein belongs to the SecA family. As to quaternary structure, monomer and homodimer. Part of the essential Sec protein translocation apparatus which comprises SecA, SecYEG and auxiliary proteins SecDF. Other proteins may also be involved.

It localises to the cell membrane. The protein resides in the cytoplasm. The enzyme catalyses ATP + H2O + cellular proteinSide 1 = ADP + phosphate + cellular proteinSide 2.. In terms of biological role, part of the Sec protein translocase complex. Interacts with the SecYEG preprotein conducting channel. Has a central role in coupling the hydrolysis of ATP to the transfer of proteins into and across the cell membrane, serving as an ATP-driven molecular motor driving the stepwise translocation of polypeptide chains across the membrane. This is Protein translocase subunit SecA from Mycoplasma pneumoniae (strain ATCC 29342 / M129 / Subtype 1) (Mycoplasmoides pneumoniae).